The sequence spans 281 residues: Fructose-bisphosphate aldolase class 1 (281 aa).

Lys191 (schiff-base intermediate with dihydroxyacetone-P) is an active-site residue.

This sequence belongs to the DeoC/FbaB aldolase family. In terms of assembly, homooctamer.

Its subcellular location is the cytoplasm. The enzyme catalyses beta-D-fructose 1,6-bisphosphate = D-glyceraldehyde 3-phosphate + dihydroxyacetone phosphate. Activated by citrate. In Pyrococcus abyssi (strain GE5 / Orsay), this protein is Fructose-bisphosphate aldolase class 1 (fba).